Reading from the N-terminus, the 338-residue chain is HTH-type transcriptional regulator SyrM 1 (338 aa).

Positions 35–92 constitute an HTH lysR-type domain; sequence LDLNTLLALEALLEHRNVTQAARHLGLSQPSVSRALIRLRGVFNDDLLVRGSSGMVPT. Positions 52–72 form a DNA-binding region, H-T-H motif; it reads VTQAARHLGLSQPSVSRALIR.

The protein belongs to the LysR transcriptional regulatory family.

Transcriptional activator that regulates the expression of genes involved in symbiosis. Among other targets it acts on the nolWBTUV operon. The polypeptide is HTH-type transcriptional regulator SyrM 1 (syrM1) (Sinorhizobium fredii (strain NBRC 101917 / NGR234)).